Consider the following 321-residue polypeptide: Putative pyridoxal kinase (321 aa).

Substrate is bound by residues Ser23 and Tyr144. ATP is bound by residues 203–204 (TS) and 230–242 (TFPR…VGTG). Residue Asp243 coordinates substrate.

Belongs to the pyridoxine kinase family. Zn(2+) is required as a cofactor. The cofactor is Mg(2+).

It carries out the reaction pyridoxal + ATP = pyridoxal 5'-phosphate + ADP + H(+). Functionally, required for synthesis of pyridoxal-5-phosphate from vitamin B6. The polypeptide is Putative pyridoxal kinase (Caenorhabditis elegans).